Reading from the N-terminus, the 199-residue chain is GTP cyclohydrolase-2 (199 aa).

49–53 (RIHSE) contributes to the GTP binding site. Zn(2+)-binding residues include cysteine 54, cysteine 65, and cysteine 67. Residues glutamine 70, 92 to 94 (EGR), and threonine 114 contribute to the GTP site. Aspartate 126 functions as the Proton acceptor in the catalytic mechanism. The active-site Nucleophile is arginine 128. Threonine 149 and lysine 154 together coordinate GTP. The interval 172–199 (ETGRNPHNSHYLETKRGKLGHLLEGDSE) is disordered.

Belongs to the GTP cyclohydrolase II family. Zn(2+) serves as cofactor.

The catalysed reaction is GTP + 4 H2O = 2,5-diamino-6-hydroxy-4-(5-phosphoribosylamino)-pyrimidine + formate + 2 phosphate + 3 H(+). Its pathway is cofactor biosynthesis; riboflavin biosynthesis; 5-amino-6-(D-ribitylamino)uracil from GTP: step 1/4. In terms of biological role, catalyzes the conversion of GTP to 2,5-diamino-6-ribosylamino-4(3H)-pyrimidinone 5'-phosphate (DARP), formate and pyrophosphate. This Teredinibacter turnerae (strain ATCC 39867 / T7901) protein is GTP cyclohydrolase-2.